We begin with the raw amino-acid sequence, 520 residues long: Succinyl-CoA:3-ketoacid coenzyme A transferase 2B, mitochondrial (520 aa).

Residues 1 to 39 (MAALRLLAWALPRGVSALRPRPALPHRLIRRYVSDRSGS) constitute a mitochondrion transit peptide. Positions 280 to 299 (ERLTTRDSKPAPGSKDNDPS) are disordered. The active-site 5-glutamyl coenzyme A thioester intermediate is E342.

The protein belongs to the 3-oxoacid CoA-transferase family. In terms of assembly, homodimer. In terms of tissue distribution, testis specific. Expressed in late spermatids. Accumulates during spermiogenesis. Also detected in the midpiece of spermatozoa.

The protein resides in the mitochondrion. The enzyme catalyses a 3-oxo acid + succinyl-CoA = a 3-oxoacyl-CoA + succinate. It functions in the pathway ketone metabolism; succinyl-CoA degradation; acetoacetyl-CoA from succinyl-CoA: step 1/1. In terms of biological role, key enzyme for ketone body catabolism. Transfers the CoA moiety from succinate to acetoacetate. Formation of the enzyme-CoA intermediate proceeds via an unstable anhydride species formed between the carboxylate groups of the enzyme and substrate. Probably play and important roles in the energy metabolism of spermatozoa. The protein is Succinyl-CoA:3-ketoacid coenzyme A transferase 2B, mitochondrial (Oxct2b) of Mus musculus (Mouse).